We begin with the raw amino-acid sequence, 492 residues long: Alpha-2-antiplasmin (492 aa).

The N-terminal stretch at 1–22 (MALLWGLLALILSCLSSLCSAQ) is a signal peptide. Residues 23 to 40 (FSPVSTMEPLDLQLMDGQ) constitute a propeptide that is removed on maturation. The disordered stretch occupies residues 56–76 (QEPGGQIAPKKAPEDCKLSPT). Cys-71 and Cys-144 form a disulfide bridge. Residues Asn-127, Asn-249, Asn-296, Asn-310, and Asn-317 are each glycosylated (N-linked (GlcNAc...) asparagine). The disordered stretch occupies residues 433–492 (SVRNPNPGAQPERKEQQDSPDGKDSFQDHKGLPRGDKPFDPDLKLGPPSEEDYAQPSSPK). The segment covering 443–475 (PERKEQQDSPDGKDSFQDHKGLPRGDKPFDPDL) has biased composition (basic and acidic residues). The residue at position 485 (Tyr-485) is a Sulfotyrosine.

This sequence belongs to the serpin family. In terms of assembly, forms protease inhibiting heterodimer with TMPRSS7. In terms of processing, proteolytically cleaved at Pro-31 by both the prolyl endopeptidase FAP form and antiplasmin-cleaving enzyme FAP soluble form to generate mature alpha-2-antiplasmin. In terms of tissue distribution, expressed by the liver and secreted in plasma.

The protein localises to the secreted. Functionally, serine protease inhibitor. The major targets of this inhibitor are plasmin and trypsin, but it also inactivates matriptase-3/TMPRSS7 and chymotrypsin. This chain is Alpha-2-antiplasmin (SERPINF2), found in Bos taurus (Bovine).